We begin with the raw amino-acid sequence, 65 residues long: Hirudin-3B (65 aa).

The segment at 1 to 3 (VVY) is interaction with thrombin active site. 3 cysteine pairs are disulfide-bonded: cysteine 6/cysteine 14, cysteine 16/cysteine 28, and cysteine 22/cysteine 39. Residues 40 to 65 (VTGEGTPKPQSHNDGDFEEIPEEYLQ) are disordered. The O-linked (GalNAc...) threonine glycan is linked to threonine 45. The segment at 55-65 (DFEEIPEEYLQ) is interaction with fibrinogen-binding exosite of thrombin. Residues 55 to 65 (DFEEIPEEYLQ) are compositionally biased toward acidic residues. Tyrosine 63 carries the post-translational modification Sulfotyrosine.

The protein belongs to the protease inhibitor I14 (hirudin) family.

The protein resides in the secreted. Functionally, hirudin is a potent thrombin-specific protease inhibitor. It forms a stable non-covalent complex with alpha-thrombin, thereby abolishing its ability to cleave fibrinogen. This Hirudo medicinalis (Medicinal leech) protein is Hirudin-3B.